The chain runs to 239 residues: Prolyl hydroxylase EGLN3 (239 aa).

The interval 62–73 (AGPRAGVSKRHL) is beta(2)beta(3) 'finger-like' loop. The tract at residues 88–104 (CEAINFLLSLIDRLVLY) is required for interaction with ADRB2. The Fe2OG dioxygenase domain maps to 116–214 (ERSKAMVACY…RYAMTVWYFD (99 aa)). 3 residues coordinate Fe cation: His-135, Asp-137, and His-196. Arg-205 contributes to the 2-oxoglutarate binding site.

Interacts with ADRB2; the interaction hydroxylates ADRB2 facilitating its ubiquitination by the VHL-E3 ligase complex. Interacts with PKM; the interaction hydroxylates PKM in hypoxia. Interacts with WDR83; the interaction leads to almost complete elimination of HIF-mediated reporter activity. Interacts with BCL2 (via its BH4 domain); the interaction disrupts the BAX-BCL4 complex inhibiting the anti-apoptotic activity of BCL2. Interacts with LIMD1, WTIP and AJUBA. The cofactor is Fe(2+). L-ascorbate is required as a cofactor. In terms of processing, ubiquitinated by SIAH1 and/or SIAH2 in response to the unfolded protein response (UPR), leading to its degradation. Highly expressed in cardiac and smooth muscle. Also high expression in brain, skeletal muscle and kidney. Low levels in lung.

The protein localises to the nucleus. The protein resides in the cytoplasm. The catalysed reaction is L-prolyl-[protein] + 2-oxoglutarate + O2 = trans-4-hydroxy-L-prolyl-[protein] + succinate + CO2. It carries out the reaction L-prolyl-[hypoxia-inducible factor alpha subunit] + 2-oxoglutarate + O2 = trans-4-hydroxy-L-prolyl-[hypoxia-inducible factor alpha subunit] + succinate + CO2. Functionally, prolyl hydroxylase that mediates hydroxylation of proline residues in target proteins, such as PKM, TELO2, ATF4 and HIF1A. Target proteins are preferentially recognized via a LXXLAP motif. Cellular oxygen sensor that catalyzes, under normoxic conditions, the post-translational formation of 4-hydroxyproline in hypoxia-inducible factor (HIF) alpha proteins. Hydroxylates a specific proline found in each of the oxygen-dependent degradation (ODD) domains (N-terminal, NODD, and C-terminal, CODD) of HIF1A. Also hydroxylates HIF2A. Has a preference for the CODD site for both HIF1A and HIF2A. Hydroxylation on the NODD site by EGLN3 appears to require prior hydroxylation on the CODD site. Hydroxylated HIFs are then targeted for proteasomal degradation via the von Hippel-Lindau ubiquitination complex. Under hypoxic conditions, the hydroxylation reaction is attenuated allowing HIFs to escape degradation resulting in their translocation to the nucleus, heterodimerization with HIF1B, and increased expression of hypoxy-inducible genes. ELGN3 is the most important isozyme in limiting physiological activation of HIFs (particularly HIF2A) in hypoxia. Also hydroxylates PKM in hypoxia, limiting glycolysis. Under normoxia, hydroxylates and regulates the stability of ADRB2. Regulator of cardiomyocyte and neuronal apoptosis. In cardiomyocytes, inhibits the anti-apoptotic effect of BCL2 by disrupting the BAX-BCL2 complex. In neurons, has a NGF-induced proapoptotic effect, probably through regulating CASP3 activity. Also essential for hypoxic regulation of neutrophilic inflammation. Plays a crucial role in DNA damage response (DDR) by hydroxylating TELO2, promoting its interaction with ATR which is required for activation of the ATR/CHK1/p53 pathway. Also mediates hydroxylation of ATF4, leading to decreased protein stability of ATF4. This is Prolyl hydroxylase EGLN3 from Mus musculus (Mouse).